The chain runs to 384 residues: 4-coumarate--CoA ligase (384 aa).

This sequence belongs to the ATP-dependent AMP-binding enzyme family.

It catalyses the reaction (E)-4-coumarate + ATP + CoA = (E)-4-coumaroyl-CoA + AMP + diphosphate. Functionally, converts p-coumaric acid into p-coumaryl CoA. This is necessary for the activation of the photoactive yellow protein (PYP) chromophore. The chain is 4-coumarate--CoA ligase (pcl) from Rhodobacter capsulatus (strain ATCC BAA-309 / NBRC 16581 / SB1003).